Here is a 325-residue protein sequence, read N- to C-terminus: Dimethylsulfide dehydrogenase subunit beta (325 aa).

3 4Fe-4S ferredoxin-type domains span residues 6–35 (ISMV…RNGR), 123–154 (SYYF…KRQE), and 156–185 (GIVL…FNEQ). Residues cysteine 15, cysteine 18, cysteine 21, cysteine 25, cysteine 132, cysteine 135, and cysteine 140 each contribute to the [4Fe-4S] cluster site. [3Fe-4S] cluster contacts are provided by cysteine 144, cysteine 165, and cysteine 171. [4Fe-4S] cluster contacts are provided by cysteine 175, cysteine 192, cysteine 195, cysteine 207, and cysteine 211.

Heterotrimer of alpha, beta and gamma subunits. Requires [3Fe-4S] cluster as cofactor. It depends on [4Fe-4S] cluster as a cofactor.

Its subcellular location is the periplasm. Functionally, electron transfer subunit of the dehydrogenase during anaerobic growth on dimethyl sulfide. This Rhodovulum sulfidophilum (Rhodobacter sulfidophilus) protein is Dimethylsulfide dehydrogenase subunit beta (ddhB).